A 74-amino-acid polypeptide reads, in one-letter code: U6-agatoxin-Ao1a (74 aa).

Residues 1 to 19 form the signal peptide; sequence MRFYIAFFFLLLAADMALS. A propeptide spanning residues 20–30 is cleaved from the precursor; that stretch reads FEIGNSEELER. 3 cysteine pairs are disulfide-bonded: cysteine 44–cysteine 56, cysteine 49–cysteine 61, and cysteine 55–cysteine 72.

As to expression, expressed by the venom gland.

It localises to the secreted. In Agelena orientalis (Funnel-web spider), this protein is U6-agatoxin-Ao1a.